The following is a 165-amino-acid chain: Probable chemoreceptor glutamine deamidase CheD (165 aa).

Belongs to the CheD family.

The enzyme catalyses L-glutaminyl-[protein] + H2O = L-glutamyl-[protein] + NH4(+). Its function is as follows. Probably deamidates glutamine residues to glutamate on methyl-accepting chemotaxis receptors (MCPs), playing an important role in chemotaxis. The chain is Probable chemoreceptor glutamine deamidase CheD from Symbiobacterium thermophilum (strain DSM 24528 / JCM 14929 / IAM 14863 / T).